A 212-amino-acid chain; its full sequence is dTTP/UTP pyrophosphatase (212 aa).

Catalysis depends on D88, which acts as the Proton acceptor.

Belongs to the Maf family. YhdE subfamily. Requires a divalent metal cation as cofactor.

It localises to the cytoplasm. It carries out the reaction dTTP + H2O = dTMP + diphosphate + H(+). It catalyses the reaction UTP + H2O = UMP + diphosphate + H(+). In terms of biological role, nucleoside triphosphate pyrophosphatase that hydrolyzes dTTP and UTP. May have a dual role in cell division arrest and in preventing the incorporation of modified nucleotides into cellular nucleic acids. The polypeptide is dTTP/UTP pyrophosphatase (Colwellia psychrerythraea (strain 34H / ATCC BAA-681) (Vibrio psychroerythus)).